A 235-amino-acid chain; its full sequence is Small ribosomal subunit protein uS3 (235 aa).

The KH type-2 domain maps to isoleucine 39–arginine 107. The segment at glutamine 213 to arginine 235 is disordered.

It belongs to the universal ribosomal protein uS3 family. In terms of assembly, part of the 30S ribosomal subunit. Forms a tight complex with proteins S10 and S14.

In terms of biological role, binds the lower part of the 30S subunit head. Binds mRNA in the 70S ribosome, positioning it for translation. The sequence is that of Small ribosomal subunit protein uS3 from Ruegeria pomeroyi (strain ATCC 700808 / DSM 15171 / DSS-3) (Silicibacter pomeroyi).